Consider the following 109-residue polypeptide: Keratin, type II microfibrillar (109 aa).

The tract at residues 1-10 (QNRQCCESNL) is linker 1. An IF rod domain is found at 1–109 (QNRQCCESNL…RLYEEEIRVL (109 aa)). Positions 11–109 (EPLFSGYIET…RLYEEEIRVL (99 aa)) are coil 1B.

The protein belongs to the intermediate filament family.

Functionally, wool microfibrillar keratin. In Ovis aries (Sheep), this protein is Keratin, type II microfibrillar.